We begin with the raw amino-acid sequence, 485 residues long: Zinc finger SWIM domain-containing protein 1 (485 aa).

The SWIM-type zinc finger occupies 363–405; the sequence is MNIQILEDTHKVQPQPPASCSCYFNQAFHLPCRHILAMLSARR.

In Homo sapiens (Human), this protein is Zinc finger SWIM domain-containing protein 1 (ZSWIM1).